The primary structure comprises 408 residues: RUN domain-containing protein 3B (408 aa).

Positions 1–25 are disordered; the sequence is MASRSLGGLSGSRGGGGGGGGKKSL. Gly residues predominate over residues 8-22; it reads GLSGSRGGGGGGGGK. Residue R13 is modified to Omega-N-methylarginine. An RUN domain is found at 58–190; the sequence is DDSSPEFNNF…IDFSFCLKGE (133 aa). Positions 213–238 are disordered; it reads DSISSDEEELRTFGSSDSESSTPENV. Phosphoserine occurs at positions 216 and 217. Positions 225–236 are enriched in polar residues; it reads FGSSDSESSTPE. Positions 301 to 326 form a coiled coil; sequence AHKLEKEQLEYIIVELQDQLKSYQSL. Residues 337-359 are disordered; that stretch reads QASLDPSHSQEGDGKQDSLNFIG.

The protein belongs to the RUNDC3 family. As to quaternary structure, interacts with RAP2A.

This Mus musculus (Mouse) protein is RUN domain-containing protein 3B (Rundc3b).